We begin with the raw amino-acid sequence, 336 residues long: Ephrin-B2 (336 aa).

An N-terminal signal peptide occupies residues 1-28 (MAMARSRRDSVWKYCWGLLMVLCRTAIS). Residues 29 to 232 (RSIVLEPIYW…LLGSEVALFA (204 aa)) are Extracellular-facing. In terms of domain architecture, Ephrin RBD spans 31 to 167 (IVLEPIYWNS…TRAMKILMKV (137 aa)). N-linked (GlcNAc...) asparagine glycosylation is present at asparagine 39. 2 cysteine pairs are disulfide-bonded: cysteine 65–cysteine 104 and cysteine 92–cysteine 156. Residue asparagine 142 is glycosylated (N-linked (GlcNAc...) asparagine). Residues 170-216 (DASSAGSARNHGPTRRPELEAGTNGRSSTTSPFVKPNPGSSTDGNSA) are disordered. Over residues 193–216 (NGRSSTTSPFVKPNPGSSTDGNSA) the composition is skewed to polar residues. The chain crosses the membrane as a helical span at residues 233 to 253 (GIASGCIIFIVIIITLVVLLL). The Cytoplasmic segment spans residues 254 to 336 (KYRRRHRKHS…QSPANIYYKV (83 aa)). A Phosphoserine modification is found at serine 263. The residue at position 277 (threonine 277) is a Phosphothreonine. The residue at position 280 (arginine 280) is an Omega-N-methylarginine. The PDZ-binding motif lies at 334–336 (YKV).

It belongs to the ephrin family. In terms of assembly, interacts with PDZRN3. Binds to the ephrin receptor EPHA3, EPHA4 and EPHB4. In terms of processing, inducible phosphorylation of tyrosine residues in the cytoplasmic domain. Expressed in inner and outer pillar cells of the organ of Corti (at protein level). Expressed on lateral floor plate cells, specifically on commissural axon segments that have passed through the floor plate. Expressed in cells of the retinal ganglion cell layer during retinal axon guidance to the optic disk. Expressed in myogenic progenitor cells.

Its subcellular location is the cell membrane. It localises to the cell junction. It is found in the adherens junction. Functionally, cell surface transmembrane ligand for Eph receptors, a family of receptor tyrosine kinases which are crucial for migration, repulsion and adhesion during neuronal, vascular and epithelial development. Binds promiscuously Eph receptors residing on adjacent cells, leading to contact-dependent bidirectional signaling into neighboring cells. The signaling pathway downstream of the receptor is referred to as forward signaling while the signaling pathway downstream of the ephrin ligand is referred to as reverse signaling. Binds to receptor tyrosine kinase including EPHA4, EPHA3 and EPHB4. Together with EPHB4 plays a central role in heart morphogenesis and angiogenesis through regulation of cell adhesion and cell migration. EPHB4-mediated forward signaling controls cellular repulsion and segregation from EFNB2-expressing cells. May play a role in constraining the orientation of longitudinally projecting axons. This Mus musculus (Mouse) protein is Ephrin-B2 (Efnb2).